The primary structure comprises 241 residues: MAPK phosphothreonine lyase (241 aa).

Histidine 106 serves as the catalytic Proton donor. The active-site Proton acceptor is lysine 136.

It belongs to the phosphothreonine lyase family.

The protein resides in the secreted. In terms of biological role, secreted effector that irreversibly inactivates host MAP kinases by catalyzing the dephosphorylation of the phosphothreonine residue in the pT-X-pY motif present in MAPKs, via a beta-elimination reaction leading to a dehydrobutyrine residue. In Salmonella choleraesuis (strain SC-B67), this protein is MAPK phosphothreonine lyase (spvC).